The primary structure comprises 146 residues: P antigen family member 1 (146 aa).

Residues Tyr16–Pro146 are disordered. A compositionally biased stretch (acidic residues) spans Ser19–Glu32. Ser63 is modified (phosphoserine). Residues Pro79–Met92 are compositionally biased toward basic and acidic residues. Position 105 is a phosphoserine (Ser105). Over residues Glu107–Gly120 the composition is skewed to basic and acidic residues. Residue Ser144 is modified to Phosphoserine.

This sequence belongs to the GAGE family. Isolated from prostate cancer cell lines; expression associated with progression to androgen insensitive phenotype. Expressed in normal testis and at lower level in normal placenta.

This is P antigen family member 1 (PAGE1) from Homo sapiens (Human).